The sequence spans 300 residues: ClpXP adapter protein SpxH (300 aa).

Belongs to the SpxH family. In terms of assembly, interacts with Spx.

The protein localises to the cytoplasm. Its function is as follows. Adapter protein required for efficient degradation of Spx by ClpXP under non-stress conditions. Interaction with Spx stabilizes Spx and exposes the C-terminus of Spx for recognition and proteolysis by ClpXP. The chain is ClpXP adapter protein SpxH from Bacillus licheniformis (strain ATCC 14580 / DSM 13 / JCM 2505 / CCUG 7422 / NBRC 12200 / NCIMB 9375 / NCTC 10341 / NRRL NRS-1264 / Gibson 46).